Consider the following 391-residue polypeptide: Argininosuccinate synthase (391 aa).

6-14 (AYSGGLDTT) provides a ligand contact to ATP. Tyrosine 84 serves as a coordination point for L-citrulline. Glycine 114 is an ATP binding site. L-aspartate-binding residues include threonine 116, asparagine 120, and aspartate 121. Asparagine 120 lines the L-citrulline pocket. L-citrulline-binding residues include arginine 124, serine 171, serine 180, glutamate 253, and tyrosine 265.

The protein belongs to the argininosuccinate synthase family. Type 1 subfamily. Homotetramer.

It localises to the cytoplasm. The enzyme catalyses L-citrulline + L-aspartate + ATP = 2-(N(omega)-L-arginino)succinate + AMP + diphosphate + H(+). It participates in amino-acid biosynthesis; L-arginine biosynthesis; L-arginine from L-ornithine and carbamoyl phosphate: step 2/3. This chain is Argininosuccinate synthase, found in Sulfolobus acidocaldarius (strain ATCC 33909 / DSM 639 / JCM 8929 / NBRC 15157 / NCIMB 11770).